Here is a 329-residue protein sequence, read N- to C-terminus: Probable carboxylesterase 8 (329 aa).

The Involved in the stabilization of the negatively charged intermediate by the formation of the oxyanion hole motif lies at 73–75 (HGG). Residues Ser161, Asp264, and His294 contribute to the active site.

The protein belongs to the 'GDXG' lipolytic enzyme family. Expressed in leaves, stems, flowers and siliques.

It carries out the reaction a carboxylic ester + H2O = an alcohol + a carboxylate + H(+). Its function is as follows. Carboxylesterase acting on esters with varying acyl chain length. This Arabidopsis thaliana (Mouse-ear cress) protein is Probable carboxylesterase 8 (CXE8).